A 111-amino-acid polypeptide reads, in one-letter code: uncharacterized protein (111 aa).

This is an uncharacterized protein from Ureaplasma parvum serovar 3 (strain ATCC 700970).